Consider the following 131-residue polypeptide: Holo-[acyl-carrier-protein] synthase (131 aa).

Residues D8 and E59 each coordinate Mg(2+).

The protein belongs to the P-Pant transferase superfamily. AcpS family. The cofactor is Mg(2+).

It localises to the cytoplasm. The catalysed reaction is apo-[ACP] + CoA = holo-[ACP] + adenosine 3',5'-bisphosphate + H(+). Transfers the 4'-phosphopantetheine moiety from coenzyme A to a Ser of acyl-carrier-protein. This chain is Holo-[acyl-carrier-protein] synthase, found in Orientia tsutsugamushi (strain Boryong) (Rickettsia tsutsugamushi).